A 447-amino-acid chain; its full sequence is N-succinylarginine dihydrolase (447 aa).

Substrate contacts are provided by residues 19 to 28 (AGLSFGNEAS), N110, and 137 to 138 (HR). The active site involves E174. R212 is a substrate binding site. Residue H248 is part of the active site. Substrate is bound by residues D250 and N359. The active-site Nucleophile is the C365.

It belongs to the succinylarginine dihydrolase family. As to quaternary structure, homodimer.

It catalyses the reaction N(2)-succinyl-L-arginine + 2 H2O + 2 H(+) = N(2)-succinyl-L-ornithine + 2 NH4(+) + CO2. It functions in the pathway amino-acid degradation; L-arginine degradation via AST pathway; L-glutamate and succinate from L-arginine: step 2/5. In terms of biological role, catalyzes the hydrolysis of N(2)-succinylarginine into N(2)-succinylornithine, ammonia and CO(2). The sequence is that of N-succinylarginine dihydrolase from Escherichia coli O6:H1 (strain CFT073 / ATCC 700928 / UPEC).